We begin with the raw amino-acid sequence, 218 residues long: Small ribosomal subunit protein uS3c (218 aa).

The KH type-2 domain maps to 39-109 (IRNYVKVNLS…QIRINVTELK (71 aa)).

This sequence belongs to the universal ribosomal protein uS3 family. In terms of assembly, part of the 30S ribosomal subunit.

The protein resides in the plastid. The protein localises to the chloroplast. This is Small ribosomal subunit protein uS3c (rps3) from Rhodomonas salina (Cryptomonas salina).